We begin with the raw amino-acid sequence, 1762 residues long: Kinase D-interacting substrate of 220 kDa (1762 aa).

Topologically, residues 1 to 508 (MSVLISQSVI…WLIVFLTLLL (508 aa)) are cytoplasmic. 11 ANK repeats span residues 45-74 (AAEQ…NWTA), 78-107 (ASKE…GWTA), 111-140 (ACYK…SVYP), 145-174 (AGRG…TTPL), 178-207 (ARKG…MTAL), 211-240 (VKGG…NTAL), 244-273 (SKEG…DTVL), 277-306 (VRGG…KTAL), 310-339 (VEKG…ETPL), 343-372 (TKMR…DTPL), and 376-405 (IRGR…KAGE). The KAP NTPase domain occupies 440 to 953 (YDLYSSALAD…NIVSVTGRLL (514 aa)). The helical transmembrane segment at 509–529 (CGGLGLVFAFTVDTNLAIAIS) threads the bilayer. Over 530 to 533 (LSFL) the chain is Extracellular. A helical transmembrane segment spans residues 534–554 (ALIYIFFIVIYFGGRREGESW). Topologically, residues 555–668 (NWAWALSTRL…SFVIFLFIVG (114 aa)) are cytoplasmic. A helical membrane pass occupies residues 669 to 689 (CIIAGITLLAIFRVDPKHLTV). Topologically, residues 690 to 696 (NAILISI) are extracellular. A helical membrane pass occupies residues 697–717 (ASVVGLAFVLNCRTWWQVLDS). Residues 718–1680 (LLNSQRKRLH…TPSTVTLNNN (963 aa)) lie on the Cytoplasmic side of the membrane. Ser-882 and Ser-885 each carry phosphoserine. Thr-914 is modified (phosphothreonine). Ser-918 is modified (phosphoserine; by PKD). Residues 1089 to 1092 (PRPP) are mediates interaction with CRKL. 7 positions are modified to phosphoserine: Ser-1163, Ser-1288, Ser-1344, Ser-1351, Ser-1353, Ser-1354, and Ser-1357. Disordered regions lie at residues 1279–1305 (DPRF…HTEL), 1336–1358 (RHSN…LNSQ), 1390–1440 (EGGT…DGRK), and 1452–1556 (YSSS…EPIR). A compositionally biased stretch (polar residues) spans 1338-1350 (SNLSWQSQTRRTP). Residues 1395 to 1422 (SSTISGRSSPHSTYYIGQSSSGGSIHST) show a composition bias toward low complexity. The span at 1423 to 1440 (LEQERGKEGELKQEDGRK) shows a compositional bias: basic and acidic residues. Over residues 1452-1462 (YSSSGVSTNEA) the composition is skewed to polar residues. Phosphoserine occurs at positions 1513, 1518, 1547, and 1566. Residues 1514-1524 (DEDESGTEESD) show a composition bias toward acidic residues. Positions 1529 to 1553 (LKDDKDKKAEGKAERVCKSPEHSAE) are enriched in basic and acidic residues. A disordered region spans residues 1571 to 1628 (DKKDSSDSGVRSNESSPNHSLHNEAADDSQLEKANLIELEDEGHSGKRGMPHSLSGLQ). Residues 1579-1590 (GVRSNESSPNHS) show a composition bias toward polar residues. Phosphoserine occurs at positions 1615 and 1625. Thr-1671 carries the phosphothreonine modification. Ser-1673 is subject to Phosphoserine. Thr-1676 carries the phosphothreonine modification. Positions 1704 to 1762 (ILRPGPSPNPTAVQNENLKSMAHKRSQRSSYTRLSKDASELHAASSESTGFGEERESIL) are disordered. Positions 1757–1762 (ERESIL) match the PDZ-binding motif.

As to quaternary structure, found in a complex, at least composed of KIDINS220, MAGI2, NTRK1 and RAPGEF2; the complex is mainly formed at late endosomes in a nerve growth factor (NGF)-dependent manner. Interacts with RAPGEF2; the interaction is strengthened after NGF stimulation. Isoform 2 interacts (via C-terminal domain) with MAGI2 isoform 1 (via PDZ domain). Interacts with NTRK1, NTRK2, NTRK3, ERKL and NGFR. Can form a ternary complex with NGFR and NTRK1 and this complex is affected by the expression levels of KIDINS220/ARMS. An increase in KIDINS220/ARMS expression leads to a decreased association of NGFR and NTRK1. Interacts (via PDZ-binding motif) with SNTA1 and SNTB2 (via PDZ domains). Interacts with EPHA4 and PRKD1. In terms of processing, tyrosine phosphorylated by NTRK1, NTRK2, EPHB2 and EPHA4. Phosphorylation at Ser-918 is induced by phorbol ester treatment. Phosphorylation by NTRK2 is induced by brain-derived neurotrophic factor (BDNF) and neurotrophin-4/5. Phosphorylation by NTRK1 is induced by nerve growth factor (NGF). In terms of tissue distribution, expressed in developing nervous system and in highly plastic areas of the adult brain. Also expressed in neuroendocrine cells, where it concentrates at the tip of neurites. Expressed in developing muscle and is concentrated at the neuromuscular junction (NMS). SNTA1 can regulate its localization in the NMS.

The protein resides in the membrane. It is found in the late endosome. Promotes a prolonged MAP-kinase signaling by neurotrophins through activation of a Rap1-dependent mechanism. Provides a docking site for the CRKL-C3G complex, resulting in Rap1-dependent sustained ERK activation. May play an important role in regulating postsynaptic signal transduction through the syntrophin-mediated localization of receptor tyrosine kinases such as EPHA4. In cooperation with SNTA1 can enhance EPHA4-induced JAK/STAT activation. Plays a role in nerve growth factor (NGF)-induced recruitment of RAPGEF2 to late endosomes and neurite outgrowth. May play a role in neurotrophin- and ephrin-mediated neuronal outgrowth and in axon guidance during neural development and in neuronal regeneration. The polypeptide is Kinase D-interacting substrate of 220 kDa (Kidins220) (Rattus norvegicus (Rat)).